Consider the following 33-residue polypeptide: Mu-theraphotoxin-Osp1b (33 aa).

3 cysteine pairs are disulfide-bonded: C2–C17, C9–C22, and C16–C29.

The protein belongs to the neurotoxin 10 (Hwtx-1) family. 22 (Htx-4) subfamily. Expressed by the venom gland.

The protein resides in the secreted. In terms of biological role, voltage-gated sodium channel Nav1.7/SCN9A inhibitor. In Orphnaecus sp. (strain Maanghit-Cave/Philippines) (Tarantula spider), this protein is Mu-theraphotoxin-Osp1b.